Consider the following 257-residue polypeptide: Acetylglutamate kinase (257 aa).

Residues 43-44 (GG), Arg65, and Asn157 contribute to the substrate site. ATP is bound by residues 180–185 (DVSGIL) and 208–210 (IIT).

Belongs to the acetylglutamate kinase family. ArgB subfamily. As to quaternary structure, homodimer.

It is found in the cytoplasm. It catalyses the reaction N-acetyl-L-glutamate + ATP = N-acetyl-L-glutamyl 5-phosphate + ADP. It functions in the pathway amino-acid biosynthesis; L-arginine biosynthesis; N(2)-acetyl-L-ornithine from L-glutamate: step 2/4. Functionally, catalyzes the ATP-dependent phosphorylation of N-acetyl-L-glutamate. This Proteus mirabilis (strain HI4320) protein is Acetylglutamate kinase.